The sequence spans 490 residues: Aspartyl/glutamyl-tRNA(Asn/Gln) amidotransferase subunit B (490 aa).

Belongs to the GatB/GatE family. GatB subfamily. In terms of assembly, heterotrimer of A, B and C subunits.

The catalysed reaction is L-glutamyl-tRNA(Gln) + L-glutamine + ATP + H2O = L-glutaminyl-tRNA(Gln) + L-glutamate + ADP + phosphate + H(+). It catalyses the reaction L-aspartyl-tRNA(Asn) + L-glutamine + ATP + H2O = L-asparaginyl-tRNA(Asn) + L-glutamate + ADP + phosphate + 2 H(+). Allows the formation of correctly charged Asn-tRNA(Asn) or Gln-tRNA(Gln) through the transamidation of misacylated Asp-tRNA(Asn) or Glu-tRNA(Gln) in organisms which lack either or both of asparaginyl-tRNA or glutaminyl-tRNA synthetases. The reaction takes place in the presence of glutamine and ATP through an activated phospho-Asp-tRNA(Asn) or phospho-Glu-tRNA(Gln). The chain is Aspartyl/glutamyl-tRNA(Asn/Gln) amidotransferase subunit B from Methylobacterium radiotolerans (strain ATCC 27329 / DSM 1819 / JCM 2831 / NBRC 15690 / NCIMB 10815 / 0-1).